The sequence spans 32 residues: RPKCCCVCGVVGRKCCSTWDKCHPVHLPCPSS.

Proline 2, proline 24, proline 28, and proline 30 each carry 4-hydroxyproline. Serine 32 bears the Serine amide mark.

In terms of processing, contains 4 disulfide bonds. Expressed by the venom duct.

The protein localises to the secreted. The chain is Conotoxin Cltx-4 from Californiconus californicus (California cone).